We begin with the raw amino-acid sequence, 634 residues long: Threonine--tRNA ligase (634 aa).

The interval methionine 1–alanine 142 is editing domain. The tract at residues proline 214–proline 513 is catalytic. Zn(2+) is bound by residues cysteine 306, histidine 358, and histidine 482.

It belongs to the class-II aminoacyl-tRNA synthetase family. As to quaternary structure, homodimer. It depends on Zn(2+) as a cofactor.

It is found in the cytoplasm. The enzyme catalyses tRNA(Thr) + L-threonine + ATP = L-threonyl-tRNA(Thr) + AMP + diphosphate + H(+). Functionally, catalyzes the attachment of threonine to tRNA(Thr) in a two-step reaction: L-threonine is first activated by ATP to form Thr-AMP and then transferred to the acceptor end of tRNA(Thr). Edits incorrectly charged L-seryl-tRNA(Thr) probably via its editing domain (tested with total bovine tRNA). Activates L-serine, but does not detectably transfer it to tRNA (tested with total bovine tRNA). This chain is Threonine--tRNA ligase, found in Methanosarcina mazei (strain ATCC BAA-159 / DSM 3647 / Goe1 / Go1 / JCM 11833 / OCM 88) (Methanosarcina frisia).